The primary structure comprises 129 residues: UPF0325 protein Spro_3794 (129 aa).

This sequence belongs to the UPF0325 family.

This is UPF0325 protein Spro_3794 from Serratia proteamaculans (strain 568).